We begin with the raw amino-acid sequence, 286 residues long: Light-independent protochlorophyllide reductase iron-sulfur ATP-binding protein (286 aa).

Residues 10–15 (GIGKST) and K39 contribute to the ATP site. Mg(2+) is bound at residue S14. Positions 95 and 129 each coordinate [4Fe-4S] cluster. 180–181 (NR) is a binding site for ATP.

Belongs to the NifH/BchL/ChlL family. As to quaternary structure, homodimer. Protochlorophyllide reductase is composed of three subunits; ChlL, ChlN and ChlB. [4Fe-4S] cluster is required as a cofactor.

The enzyme catalyses chlorophyllide a + oxidized 2[4Fe-4S]-[ferredoxin] + 2 ADP + 2 phosphate = protochlorophyllide a + reduced 2[4Fe-4S]-[ferredoxin] + 2 ATP + 2 H2O. The protein operates within porphyrin-containing compound metabolism; chlorophyll biosynthesis (light-independent). In terms of biological role, component of the dark-operative protochlorophyllide reductase (DPOR) that uses Mg-ATP and reduced ferredoxin to reduce ring D of protochlorophyllide (Pchlide) to form chlorophyllide a (Chlide). This reaction is light-independent. The L component serves as a unique electron donor to the NB-component of the complex, and binds Mg-ATP. In Synechococcus elongatus (strain ATCC 33912 / PCC 7942 / FACHB-805) (Anacystis nidulans R2), this protein is Light-independent protochlorophyllide reductase iron-sulfur ATP-binding protein.